Reading from the N-terminus, the 242-residue chain is Probable transcriptional regulatory protein lhv_0777 (242 aa).

Residues 1 to 22 form a disordered region; it reads MSGHSKWHNIQGRKNAQDAKRG.

The protein belongs to the TACO1 family.

Its subcellular location is the cytoplasm. The chain is Probable transcriptional regulatory protein lhv_0777 from Lactobacillus helveticus (strain DPC 4571).